We begin with the raw amino-acid sequence, 297 residues long: Bifunctional protein FolD 1 (297 aa).

Residues 174–176 (GRS), Ser199, and Ile240 contribute to the NADP(+) site.

Belongs to the tetrahydrofolate dehydrogenase/cyclohydrolase family. In terms of assembly, homodimer.

It catalyses the reaction (6R)-5,10-methylene-5,6,7,8-tetrahydrofolate + NADP(+) = (6R)-5,10-methenyltetrahydrofolate + NADPH. The enzyme catalyses (6R)-5,10-methenyltetrahydrofolate + H2O = (6R)-10-formyltetrahydrofolate + H(+). Its pathway is one-carbon metabolism; tetrahydrofolate interconversion. Functionally, catalyzes the oxidation of 5,10-methylenetetrahydrofolate to 5,10-methenyltetrahydrofolate and then the hydrolysis of 5,10-methenyltetrahydrofolate to 10-formyltetrahydrofolate. The protein is Bifunctional protein FolD 1 of Acinetobacter baylyi (strain ATCC 33305 / BD413 / ADP1).